A 184-amino-acid polypeptide reads, in one-letter code: GTP cyclohydrolase 1 (184 aa).

C74, H77, and C145 together coordinate Zn(2+).

This sequence belongs to the GTP cyclohydrolase I family. In terms of assembly, toroid-shaped homodecamer, composed of two pentamers of five dimers.

It carries out the reaction GTP + H2O = 7,8-dihydroneopterin 3'-triphosphate + formate + H(+). It functions in the pathway cofactor biosynthesis; 7,8-dihydroneopterin triphosphate biosynthesis; 7,8-dihydroneopterin triphosphate from GTP: step 1/1. The polypeptide is GTP cyclohydrolase 1 (folE) (Aquifex aeolicus (strain VF5)).